Consider the following 621-residue polypeptide: tRNA uridine 5-carboxymethylaminomethyl modification enzyme MnmG (621 aa).

Residue 8 to 13 participates in FAD binding; it reads GAGHAG. 269-283 is an NAD(+) binding site; that stretch reads GPRYCPSVEDKIFRF.

It belongs to the MnmG family. As to quaternary structure, homodimer. Heterotetramer of two MnmE and two MnmG subunits. The cofactor is FAD.

The protein resides in the cytoplasm. Its function is as follows. NAD-binding protein involved in the addition of a carboxymethylaminomethyl (cmnm) group at the wobble position (U34) of certain tRNAs, forming tRNA-cmnm(5)s(2)U34. In Chlorobium phaeobacteroides (strain DSM 266 / SMG 266 / 2430), this protein is tRNA uridine 5-carboxymethylaminomethyl modification enzyme MnmG.